The primary structure comprises 730 residues: MERLVATRLVTGLAVKIMRSNGVIHNANITSVNMDRSSVNVEWKEGEANKGKEISFADVISVNPELLDAVLAPTNVKENMPPQRNVSSQNHKRKTISKIPAPKEVAAKNSLLSESGAQSVLRERSTRMTAIHETLPYENEMEAESTPLPIQQNSVQARSRSTKVSIAEEPRLQTRISEIVEESLPSGRNNQGRRKSNIVKEMEKMKNKREEQRAQNYERRMKRAQDYDTSVPNWEFGKMIKEFRATMDCHRISMADPAEEHRICVCVRKRPLNKQELSKKEIDIISVPSKNIVLVHEPKLKVDLTKYLENQAFRFDFSFDETATNEVVYRFTARPLVQSIFEGGKATCFAYGQTGSGKTHTMGGDFSGKSQNVSKGVYAFASRDVFLLLDQPRYKHLDLDVFVTFFEIYNGKVFDLLNKKTKLRVLEDAKQEVQVVGLLEKQVISADDVFKMIEIGSACRTSGQTFANTSSSRSHACLQIILRRGSKLHGKFSLVDLAGNERGVDTASADRITRMEGAEINRSLLALKECIRALGQNKSHTPFRESKLTQILRDSFIGENSRTCMIAMLSPGFNSCEYTLNTLRYADRVKELSPQNAETNDDNLQMEDSGGSHASIEGLQLQDDFLLKDEELSTHNSFQDALNRVGELEDKAVDELRELVQKEPEWTNLLQMTEQPDYDLENFVMQAEYLIQERSKVLIALGDSINSLRLALQVEEQASKQISKKKRSNK.

Positions 1–256 (MERLVATRLV…MDCHRISMAD (256 aa)) are globular. A disordered region spans residues 79–98 (NMPPQRNVSSQNHKRKTISK). Residues 211-242 (EQRAQNYERRMKRAQDYDTSVPNWEFGKMIKE) form a negative regulator of microtubule-binding region. The Kinesin motor domain occupies 262-592 (RICVCVRKRP…LRYADRVKEL (331 aa)). Residues Arg268 and 352-359 (GQTGSGKT) contribute to the ATP site. Residues 599 to 730 (TNDDNLQMED…QISKKKRSNK (132 aa)) are a coiled coil.

This sequence belongs to the TRAFAC class myosin-kinesin ATPase superfamily. Kinesin family. MCAK/KIF2 subfamily.

Its subcellular location is the cytoplasm. The protein localises to the cytoskeleton. The protein resides in the nucleus. It is found in the chromosome. It localises to the centromere. Its subcellular location is the kinetochore. Promotes ATP-dependent removal of tubulin dimers from microtubules. Regulates the turnover of microtubules at the kinetochore and functions in chromosome segregation during mitosis. May play a role in chromosome congression and may be required for the lateral to end-on conversion of the chromosome-microtubule attachment. The sequence is that of Kinesin-like protein KIF2C (kif2c) from Xenopus laevis (African clawed frog).